Here is a 240-residue protein sequence, read N- to C-terminus: Axial regulator YABBY 3 (240 aa).

The C4-type zinc finger occupies 30–57 (CSFCDTVLAVSVPPSSLFKTVTVRCGHC). The segment at 135-156 (DHLQEMPRPPPANRPPEKRQRV) is disordered.

Belongs to the YABBY family. Interacts with SPL/NZZ. Interacts with SPEAR2. Binds to LUG and LUH; these complexes promote adaxial cell identity in leaves as well as embryonic shoot apical meristem (SAM) initiation and postembryonic SAM maintenance. As to expression, expressed in abaxial regions of lateral aerial organ primordia leading to cotyledons, leaves, flower meristems, sepals, petals, stamen and carpels, but not in roots.

Its subcellular location is the nucleus. Functionally, involved in the abaxial cell fate determination during embryogenesis and organogenesis. Regulates the initiation of embryonic shoot apical meristem (SAM) development. Contributes to the repression of KNOX genes (STM, KNAT1/BP and KNAT2) to avoid ectopic meristems. Binds DNA without sequence specificity. The polypeptide is Axial regulator YABBY 3 (YAB3) (Arabidopsis thaliana (Mouse-ear cress)).